Reading from the N-terminus, the 242-residue chain is Transcription factor TCP17 (242 aa).

A TCP domain is found at Gly33 to Leu91.

As to quaternary structure, interacts with SPL. In terms of tissue distribution, expressed in cotyledons, particularly in the vascular region, in leaves, roots, stems, buds, flowers and siliques.

Its subcellular location is the nucleus. Plays a pivotal role in the control of morphogenesis of shoot organs by negatively regulating the expression of boundary-specific genes such as CUC genes, probably through the induction of miRNA (e.g. miR164). Participates in ovule development. The protein is Transcription factor TCP17 (TCP17) of Arabidopsis thaliana (Mouse-ear cress).